A 179-amino-acid polypeptide reads, in one-letter code: Putative ankyrin repeat protein RF_0922 (179 aa).

5 ANK repeats span residues 5-34, 40-72, 75-104, 110-139, and 145-174; these read KGCT…EQAI, NGST…INHV, NGNT…SQAI, NGDT…EQAI, and NGNT…KQAI.

This is Putative ankyrin repeat protein RF_0922 from Rickettsia felis (strain ATCC VR-1525 / URRWXCal2) (Rickettsia azadi).